The chain runs to 748 residues: Subtilisin-like protease (748 aa).

An N-terminal signal peptide occupies residues 1 to 24; it reads MMKMELRLLVSLIFILCSISMLAA. The Inhibitor I9 domain maps to 37–115; the sequence is TYIVHVKKSE…ARPERTLELH (79 aa). A Peptidase S8 domain is found at 122–600; sequence FLGLKQGQGL…AGHVNPVKAN (479 aa). Catalysis depends on charge relay system residues Asp-147 and His-206. Residues 365-454 form the PA domain; sequence PLVYPGSFGY…VEVSYAAGLT (90 aa). N-linked (GlcNAc...) asparagine glycosylation is found at Asn-376, Asn-380, and Asn-405. Residue Ser-533 is the Charge relay system of the active site. N-linked (GlcNAc...) asparagine glycans are attached at residues Asn-675 and Asn-722.

It belongs to the peptidase S8 family.

It is found in the secreted. The protein localises to the extracellular space. Its subcellular location is the apoplast. Functionally, required for arbuscular mycorrhiza (AM) development during AM symbiosis with AM fungi (e.g. Glomeromycota intraradices). This Medicago truncatula (Barrel medic) protein is Subtilisin-like protease.